Here is a 312-residue protein sequence, read N- to C-terminus: Ribosomal RNA small subunit methyltransferase H (312 aa).

Residues 34–36, Asp-54, Phe-81, Asp-102, and Gln-109 contribute to the S-adenosyl-L-methionine site; that span reads AGH.

This sequence belongs to the methyltransferase superfamily. RsmH family.

It is found in the cytoplasm. The enzyme catalyses cytidine(1402) in 16S rRNA + S-adenosyl-L-methionine = N(4)-methylcytidine(1402) in 16S rRNA + S-adenosyl-L-homocysteine + H(+). In terms of biological role, specifically methylates the N4 position of cytidine in position 1402 (C1402) of 16S rRNA. This chain is Ribosomal RNA small subunit methyltransferase H, found in Geobacter sp. (strain M21).